Consider the following 87-residue polypeptide: uncharacterized protein (87 aa).

Residues 25-47 traverse the membrane as a helical segment; it reads FFWEVCNMILFIIIALCGYLLFS.

It localises to the membrane. This is an uncharacterized protein from Bacillus subtilis (strain 168).